A 508-amino-acid polypeptide reads, in one-letter code: Potassium/proton antiporter CemA (508 aa).

Transmembrane regions (helical) follow at residues 66 to 86, 282 to 302, 386 to 406, 433 to 453, and 468 to 488; these read LFIIYWSLLEYRISLCFLNLL, YQALASIQYIGCLIFLPWIIS, ILHLLTGMICFTTLGALFILG, ILLLTDLCIGFHSPHGWEVVI, and IISCFVSTFPVILDTVSKYWI.

The protein belongs to the CemA family.

It is found in the plastid. Its subcellular location is the chloroplast inner membrane. It catalyses the reaction K(+)(in) + H(+)(out) = K(+)(out) + H(+)(in). Contributes to K(+)/H(+) antiport activity by supporting proton efflux to control proton extrusion and homeostasis in chloroplasts in a light-dependent manner to modulate photosynthesis. Prevents excessive induction of non-photochemical quenching (NPQ) under continuous-light conditions. Indirectly promotes efficient inorganic carbon uptake into chloroplasts. This chain is Potassium/proton antiporter CemA, found in Anthoceros angustus (Hornwort).